The sequence spans 227 residues: MAYPFQLGLQDATSPIMEELTSFHDHTLMIVFLISSLVLYIILLMLTTKLTHTSTMDAQEVETIWTILPAVILILIALPSLRILYMMDEINNPALTVKTMGHQWYWSYEYTDYEDLCFDSYMIPTNDLKPGELRLLEVDNRVVLPMELPIRMLISSEDVLHSWAVPSLGLKTDAIPGRLNQATVTSNRPGLFYGQCSEICGSNHSFMPIVLEMVPLKHFENWSASMI.

The Mitochondrial intermembrane portion of the chain corresponds to 1–14 (MAYPFQLGLQDATS). A helical membrane pass occupies residues 15–45 (PIMEELTSFHDHTLMIVFLISSLVLYIILLM). At 46-59 (LTTKLTHTSTMDAQ) the chain is on the mitochondrial matrix side. Residues 60-87 (EVETIWTILPAVILILIALPSLRILYMM) form a helical membrane-spanning segment. Over 88-227 (DEINNPALTV…HFENWSASMI (140 aa)) the chain is Mitochondrial intermembrane. Cu cation contacts are provided by His-161, Cys-196, Glu-198, Cys-200, His-204, and Met-207. Residue Glu-198 participates in Mg(2+) binding.

This sequence belongs to the cytochrome c oxidase subunit 2 family. Component of the cytochrome c oxidase (complex IV, CIV), a multisubunit enzyme composed of 14 subunits. The complex is composed of a catalytic core of 3 subunits MT-CO1, MT-CO2 and MT-CO3, encoded in the mitochondrial DNA, and 11 supernumerary subunits COX4I, COX5A, COX5B, COX6A, COX6B, COX6C, COX7A, COX7B, COX7C, COX8 and NDUFA4, which are encoded in the nuclear genome. The complex exists as a monomer or a dimer and forms supercomplexes (SCs) in the inner mitochondrial membrane with NADH-ubiquinone oxidoreductase (complex I, CI) and ubiquinol-cytochrome c oxidoreductase (cytochrome b-c1 complex, complex III, CIII), resulting in different assemblies (supercomplex SCI(1)III(2)IV(1) and megacomplex MCI(2)III(2)IV(2)). Found in a complex with TMEM177, COA6, COX18, COX20, SCO1 and SCO2. Interacts with TMEM177 in a COX20-dependent manner. Interacts with COX20. Interacts with COX16. It depends on Cu cation as a cofactor.

Its subcellular location is the mitochondrion inner membrane. The enzyme catalyses 4 Fe(II)-[cytochrome c] + O2 + 8 H(+)(in) = 4 Fe(III)-[cytochrome c] + 2 H2O + 4 H(+)(out). In terms of biological role, component of the cytochrome c oxidase, the last enzyme in the mitochondrial electron transport chain which drives oxidative phosphorylation. The respiratory chain contains 3 multisubunit complexes succinate dehydrogenase (complex II, CII), ubiquinol-cytochrome c oxidoreductase (cytochrome b-c1 complex, complex III, CIII) and cytochrome c oxidase (complex IV, CIV), that cooperate to transfer electrons derived from NADH and succinate to molecular oxygen, creating an electrochemical gradient over the inner membrane that drives transmembrane transport and the ATP synthase. Cytochrome c oxidase is the component of the respiratory chain that catalyzes the reduction of oxygen to water. Electrons originating from reduced cytochrome c in the intermembrane space (IMS) are transferred via the dinuclear copper A center (CU(A)) of subunit 2 and heme A of subunit 1 to the active site in subunit 1, a binuclear center (BNC) formed by heme A3 and copper B (CU(B)). The BNC reduces molecular oxygen to 2 water molecules using 4 electrons from cytochrome c in the IMS and 4 protons from the mitochondrial matrix. In Anisomys imitator (Uneven-toothed rat), this protein is Cytochrome c oxidase subunit 2 (MT-CO2).